The primary structure comprises 606 residues: Zinc finger protein 214 (606 aa).

The region spanning 3–83 is the KRAB domain; that stretch reads VTFEDVTIIF…GAQMYENQNY (81 aa). The segment at 275 to 297 adopts a C2H2-type 1; degenerate zinc-finger fold; the sequence is YGCDEVDGNFHQSSGVHFHQRVH. The segment at 303–325 adopts a C2H2-type 2 zinc-finger fold; the sequence is YSCNACGKSFSQISSLHNHQRVH. A C2H2-type 3; degenerate zinc finger spans residues 330–352; it reads FYKIECDKDLSRNSLLHIHQRLH. C2H2-type zinc fingers lie at residues 358-380, 386-408, 414-436, 442-464, 470-492, 498-520, 526-548, and 554-576; these read FKCN…QRVH, YKCD…QLVH, YKCE…QRVH, YKCD…QRVH, YTCP…QRVH, YKCH…QRVH, and YQCA…QRVH.

Belongs to the krueppel C2H2-type zinc-finger protein family.

It is found in the nucleus. Its function is as follows. May be involved in transcriptional regulation. This chain is Zinc finger protein 214 (ZNF214), found in Homo sapiens (Human).